The primary structure comprises 557 residues: Aerobic glycerol-3-phosphate dehydrogenase (557 aa).

21–49 (DLVIIGGGITGAGIALDASERGMKVALVE) contacts FAD.

This sequence belongs to the FAD-dependent glycerol-3-phosphate dehydrogenase family. FAD is required as a cofactor.

The protein resides in the cytoplasm. The enzyme catalyses a quinone + sn-glycerol 3-phosphate = dihydroxyacetone phosphate + a quinol. It functions in the pathway polyol metabolism; glycerol degradation via glycerol kinase pathway; glycerone phosphate from sn-glycerol 3-phosphate (aerobic route): step 1/1. The sequence is that of Aerobic glycerol-3-phosphate dehydrogenase (glpD) from Staphylococcus aureus (strain bovine RF122 / ET3-1).